Reading from the N-terminus, the 266-residue chain is 22 kDa alpha-zein 4 (266 aa).

A signal peptide spans M1–A21.

This sequence belongs to the zein family. As to quaternary structure, interacts with OP10 (via N-terminus). In terms of tissue distribution, expressed in endosperm, mainly in the peripheral regions.

Functionally, zeins are major seed storage proteins. The chain is 22 kDa alpha-zein 4 from Zea mays (Maize).